The primary structure comprises 63 residues: Large ribosomal subunit protein uL29 (63 aa).

It belongs to the universal ribosomal protein uL29 family.

The polypeptide is Large ribosomal subunit protein uL29 (Stutzerimonas stutzeri (strain A1501) (Pseudomonas stutzeri)).